Consider the following 47-residue polypeptide: Defensin NsD7 (47 aa).

Disulfide bonds link C3–C47, C14–C34, C20–C41, and C24–C43. A 1,2-diacyl-sn-glycero-3-phosphate-binding residues include K4, H33, K36, and R39.

This sequence belongs to the DEFL family. In the presence of phosphatidic acid (PA), forms right-handed double helices which tend to bundle into fibrils. Each helix is a repetition of dimers containing 2 bound molecules of PA per dimer. Dimers are arranged orthogonally in a tip-to-tip configuration with 1 molecule of PA located at the dimer contact interface. Association of 2 helices to form a double helix depends on intercalating isoleucine residues Ile-15 and Ile-37. Bundling of double helices into fibrils depends on Arg-26.

The protein resides in the vacuole. Plant defense peptide. Disrupts membranes containing phosphatidic acid (PA) via a PA-dependent oligomerization process. The chain is Defensin NsD7 from Nicotiana suaveolens (Australian tobacco).